The following is a 242-amino-acid chain: Putative pyrimidine-specific ribonucleoside hydrolase RihB (242 aa).

2 residues coordinate substrate: Gln156 and His168.

The protein belongs to the IUNH family. RihB subfamily.

The enzyme catalyses a pyrimidine ribonucleoside + H2O = a pyrimidine nucleobase + D-ribose. The protein is Putative pyrimidine-specific ribonucleoside hydrolase RihB (rihB) of Shigella boydii serotype 4 (strain Sb227).